A 529-amino-acid chain; its full sequence is Heat shock protein 60 (529 aa).

Residues 460–484 (YQATVQHPPPQSSYEEDGRRPPTQP) form a disordered region.

The sequence is that of Heat shock protein 60 from Giardia intestinalis (Giardia lamblia).